The primary structure comprises 300 residues: Protein orai (300 aa).

The Cytoplasmic segment spans residues 1 to 128 (MPRSHDPSRV…SKAQLKASSR (128 aa)). The interval 58–82 (QPPSSGGGSRNVGGGDGAAGNSKNG) is disordered. Residues 62–75 (SGGGSRNVGGGDGA) show a composition bias toward gly residues. A helical transmembrane segment spans residues 129–146 (TSALLAGFAMVCLVELQY). At 147-153 (DDSTSKP) the chain is on the extracellular side. Residues 154–174 (LLIVLGVVTSLLVSVHLLALM) form a helical membrane-spanning segment. At 175-205 (MSTCILPYMEATGCTQDSPHLKLKFYIDLSW) the chain is on the cytoplasmic side. A helical membrane pass occupies residues 206–226 (LFSTCIGLLLFLVEIGVIFYV). Residues 227–237 (KFTAVGYPTAG) are Extracellular-facing. A helical membrane pass occupies residues 238-258 (YITTAMLIPVGIVFVLFSYLI). Residues 259–300 (HKNRVSHSLGRFKDKVDTMKQFLDVEANLQKSTIAPSTIRDI) lie on the Cytoplasmic side of the membrane.

Belongs to the Orai family.

It localises to the membrane. Functionally, ca(2+) release-activated Ca(2+)-like (CRAC-like) channel subunit which mediates Ca(2+) influx and increase in Ca(2+)-selective current by synergy with the Ca(2+) sensor, stim-1. Required for Ca(2+) and IP3-dependent contractile activity of sheath cells and the spermatheca. Affects brood size and somatic cell function. The chain is Protein orai (orai-1) from Caenorhabditis briggsae.